We begin with the raw amino-acid sequence, 171 residues long: uncharacterized protein (171 aa).

Positions 56 to 83 are disordered; that stretch reads TVGVNKNAKNGPTQSQTRSGSAGAQARM. A compositionally biased stretch (polar residues) spans 57–77; it reads VGVNKNAKNGPTQSQTRSGSA. A J domain is found at 113 to 170; that stretch reads KAFETLGLGASATTADIKAAYKDLVKKHHPDANGGDRGSEERFRAVIQAYQLLKQAGF.

This is an uncharacterized protein from Sinorhizobium sp.